The chain runs to 111 residues: Large ribosomal subunit protein eL33x (111 aa).

This sequence belongs to the eukaryotic ribosomal protein eL33 family.

This is Large ribosomal subunit protein eL33x (RPL35AD) from Arabidopsis thaliana (Mouse-ear cress).